The primary structure comprises 513 residues: ATP synthase subunit alpha (513 aa).

169–176 is a binding site for ATP; the sequence is GDRQTGKT.

It belongs to the ATPase alpha/beta chains family. As to quaternary structure, F-type ATPases have 2 components, CF(1) - the catalytic core - and CF(0) - the membrane proton channel. CF(1) has five subunits: alpha(3), beta(3), gamma(1), delta(1), epsilon(1). CF(0) has three main subunits: a(1), b(2) and c(9-12). The alpha and beta chains form an alternating ring which encloses part of the gamma chain. CF(1) is attached to CF(0) by a central stalk formed by the gamma and epsilon chains, while a peripheral stalk is formed by the delta and b chains.

It localises to the cell inner membrane. The catalysed reaction is ATP + H2O + 4 H(+)(in) = ADP + phosphate + 5 H(+)(out). Functionally, produces ATP from ADP in the presence of a proton gradient across the membrane. The alpha chain is a regulatory subunit. In Pasteurella multocida (strain Pm70), this protein is ATP synthase subunit alpha.